The following is a 188-amino-acid chain: Protein SYC1 (188 aa).

Component of the cleavage and polyadenylation factor (CPF) complex, which is composed of at least PTI1, SYC1, SSU72, GLC7, MPE1, REF2, PFS2, PTA1, YSH1/BRR5, SWD2, CFT2/YDH1, YTH1, CFT1/YHH1, FIP1 and PAP1. Component of the APT complex, which is a subcomplex of CPF, and is composed of PTI1, SYC1, SSU72, GLC7, REF2, PTA1 and SWD2.

The protein localises to the nucleus. In terms of biological role, component of the cleavage and polyadenylation factor (CPF) complex, which plays a key role in polyadenylation-dependent pre-mRNA 3'-end formation and cooperates with cleavage factors including the CFIA complex and NAB4/CFIB. Component of the APT complex, which may be involved in polyadenylation-independent transcript 3'-end formation, including snoRNAs and snRNAs. The chain is Protein SYC1 (SYC1) from Saccharomyces cerevisiae (strain ATCC 204508 / S288c) (Baker's yeast).